A 414-amino-acid chain; its full sequence is Enolase (414 aa).

Residue Gln162 coordinates (2R)-2-phosphoglycerate. The active-site Proton donor is the Glu204. Residues Asp239, Glu280, and Asp307 each contribute to the Mg(2+) site. Residues Lys332, Arg361, Ser362, and Lys383 each coordinate (2R)-2-phosphoglycerate. Lys332 functions as the Proton acceptor in the catalytic mechanism.

Belongs to the enolase family. The cofactor is Mg(2+).

The protein localises to the cytoplasm. It is found in the secreted. The protein resides in the cell surface. The enzyme catalyses (2R)-2-phosphoglycerate = phosphoenolpyruvate + H2O. Its pathway is carbohydrate degradation; glycolysis; pyruvate from D-glyceraldehyde 3-phosphate: step 4/5. Functionally, catalyzes the reversible conversion of 2-phosphoglycerate (2-PG) into phosphoenolpyruvate (PEP). It is essential for the degradation of carbohydrates via glycolysis. In Campylobacter jejuni subsp. jejuni serotype O:6 (strain 81116 / NCTC 11828), this protein is Enolase.